The chain runs to 298 residues: Lipoyl synthase (298 aa).

Cys-40, Cys-45, Cys-51, Cys-67, Cys-71, Cys-74, and Ser-280 together coordinate [4Fe-4S] cluster. Positions 53-269 (AVRKTATFMI…KEIALSKGFS (217 aa)) constitute a Radical SAM core domain.

It belongs to the radical SAM superfamily. Lipoyl synthase family. The cofactor is [4Fe-4S] cluster.

The protein localises to the cytoplasm. The enzyme catalyses [[Fe-S] cluster scaffold protein carrying a second [4Fe-4S](2+) cluster] + N(6)-octanoyl-L-lysyl-[protein] + 2 oxidized [2Fe-2S]-[ferredoxin] + 2 S-adenosyl-L-methionine + 4 H(+) = [[Fe-S] cluster scaffold protein] + N(6)-[(R)-dihydrolipoyl]-L-lysyl-[protein] + 4 Fe(3+) + 2 hydrogen sulfide + 2 5'-deoxyadenosine + 2 L-methionine + 2 reduced [2Fe-2S]-[ferredoxin]. It participates in protein modification; protein lipoylation via endogenous pathway; protein N(6)-(lipoyl)lysine from octanoyl-[acyl-carrier-protein]. Catalyzes the radical-mediated insertion of two sulfur atoms into the C-6 and C-8 positions of the octanoyl moiety bound to the lipoyl domains of lipoate-dependent enzymes, thereby converting the octanoylated domains into lipoylated derivatives. The sequence is that of Lipoyl synthase from Bacillus cereus (strain B4264).